A 526-amino-acid chain; its full sequence is Peptide chain release factor 3 (526 aa).

Positions 9–277 (DKRRTFAIIS…GIVEWAPKPQ (269 aa)) constitute a tr-type G domain. Residues 18–25 (SHPDAGKT), 86–90 (DTPGH), and 140–143 (NKLD) each bind GTP.

This sequence belongs to the TRAFAC class translation factor GTPase superfamily. Classic translation factor GTPase family. PrfC subfamily.

The protein localises to the cytoplasm. Its function is as follows. Increases the formation of ribosomal termination complexes and stimulates activities of RF-1 and RF-2. It binds guanine nucleotides and has strong preference for UGA stop codons. It may interact directly with the ribosome. The stimulation of RF-1 and RF-2 is significantly reduced by GTP and GDP, but not by GMP. This is Peptide chain release factor 3 from Shewanella sediminis (strain HAW-EB3).